The following is a 373-amino-acid chain: Cobalt-precorrin-5B C(1)-methyltransferase (373 aa).

The protein belongs to the CbiD family.

It carries out the reaction Co-precorrin-5B + S-adenosyl-L-methionine = Co-precorrin-6A + S-adenosyl-L-homocysteine. Its pathway is cofactor biosynthesis; adenosylcobalamin biosynthesis; cob(II)yrinate a,c-diamide from sirohydrochlorin (anaerobic route): step 6/10. In terms of biological role, catalyzes the methylation of C-1 in cobalt-precorrin-5B to form cobalt-precorrin-6A. The protein is Cobalt-precorrin-5B C(1)-methyltransferase of Listeria welshimeri serovar 6b (strain ATCC 35897 / DSM 20650 / CCUG 15529 / CIP 8149 / NCTC 11857 / SLCC 5334 / V8).